The primary structure comprises 294 residues: tRNA-cytidine(32) 2-sulfurtransferase (294 aa).

The short motif at 58–63 is the PP-loop motif element; the sequence is SGGKDS. 3 residues coordinate [4Fe-4S] cluster: C133, C136, and C224.

This sequence belongs to the TtcA family. Homodimer. The cofactor is Mg(2+). It depends on [4Fe-4S] cluster as a cofactor.

The protein resides in the cytoplasm. The enzyme catalyses cytidine(32) in tRNA + S-sulfanyl-L-cysteinyl-[cysteine desulfurase] + AH2 + ATP = 2-thiocytidine(32) in tRNA + L-cysteinyl-[cysteine desulfurase] + A + AMP + diphosphate + H(+). Its pathway is tRNA modification. Its function is as follows. Catalyzes the ATP-dependent 2-thiolation of cytidine in position 32 of tRNA, to form 2-thiocytidine (s(2)C32). The sulfur atoms are provided by the cysteine/cysteine desulfurase (IscS) system. This chain is tRNA-cytidine(32) 2-sulfurtransferase, found in Ruegeria pomeroyi (strain ATCC 700808 / DSM 15171 / DSS-3) (Silicibacter pomeroyi).